We begin with the raw amino-acid sequence, 297 residues long: Homoserine kinase (297 aa).

82 to 92 (PLTRGLGSSAS) contacts ATP.

The protein belongs to the GHMP kinase family. Homoserine kinase subfamily.

Its subcellular location is the cytoplasm. The catalysed reaction is L-homoserine + ATP = O-phospho-L-homoserine + ADP + H(+). It participates in amino-acid biosynthesis; L-threonine biosynthesis; L-threonine from L-aspartate: step 4/5. Catalyzes the ATP-dependent phosphorylation of L-homoserine to L-homoserine phosphate. The protein is Homoserine kinase of Bacillus cereus (strain AH187).